A 381-amino-acid chain; its full sequence is GDP-mannose transporter (381 aa).

The Cytoplasmic portion of the chain corresponds to 1-39 (MVESKKTDDYAIEMDKIDQGSKNFEAAAPPQPRSVPSSS). Residues 40–60 (LSGNPVLPVLAYCGSSILMTV) form a helical membrane-spanning segment. Residues 61 to 68 (MNKYVLSG) are Lumenal-facing. Residues 69-89 (LDFNLNFFLLCVQSIVCIIAI) form a helical membrane-spanning segment. Topologically, residues 90–109 (QTCKFCGLITYRDFSADEAK) are cytoplasmic. The chain crosses the membrane as a helical span at residues 110–126 (KWFPISLLLIGMIYTGS). Residues 127-133 (KALQFLS) lie on the Lumenal side of the membrane. Residues 134 to 150 (IPVYTIFKNLTIILIAY) traverse the membrane as a helical segment. Residues 151-159 (GEVLWFGGS) are Cytoplasmic-facing. A helical transmembrane segment spans residues 160-181 (VTGLTLFSFGLMVLSSIIAAWA). Topologically, residues 182 to 199 (DIKHAVESSGDTSAQVST) are lumenal. A helical transmembrane segment spans residues 200-220 (LNAGYIWMLINCLCTSSYVLG). The Cytoplasmic portion of the chain corresponds to 221 to 232 (MRKRIKLTNFKD). Residues 233–253 (FDTMFYNNLLSIPVLVVLTGL) form a helical membrane-spanning segment. The Lumenal segment spans residues 254–273 (MEDWSSANIDRNFPQADRSS). A helical membrane pass occupies residues 274 to 294 (IMFAMILSGLSSVFISYTSAW). The Cytoplasmic segment spans residues 295 to 302 (CVRVTSST). Residues 303–323 (TYSMVGALNKLPIALSGLIFF) form a helical membrane-spanning segment. Over 324 to 326 (DAP) the chain is Lumenal. Residues 327 to 347 (VTFPSVSAIAVGFVSGIVYAI) traverse the membrane as a helical segment. Topologically, residues 348 to 381 (AKIKQNAKPKTGVLPTSNPLVSASSQSMRDSLRS) are cytoplasmic.

It belongs to the TPT transporter family. SLC35D subfamily. Homooligomer.

Its subcellular location is the golgi apparatus membrane. The protein resides in the cytoplasmic vesicle membrane. The protein localises to the endoplasmic reticulum membrane. Involved in the import of GDP-mannose from the cytoplasm into the Golgi lumen. The sequence is that of GDP-mannose transporter (gmt1) from Aspergillus oryzae (strain ATCC 42149 / RIB 40) (Yellow koji mold).